The chain runs to 365 residues: MAAFQCPPERVLRPLARAISASQRRRQTYEKWPTGRKSYRAVMCNELGKPLVVEDKFSTENLGTSQVRVAVHSCGINFADILKCIGKYQEKPELPFVPGTEISGEVVEVGSKVTSLSKGDRVLGVCGQGGGMAEECVLPQTALWKIPSSLSFTQAAALAISYGTAYIGLKHKANLQPGQTVLVTAAAGALGLASVDLAANVFGAKVIGASRKEKLVIVQEIGATATIDYTRENIKDKVKELTDGHGANVIMEAVGGDVFKQCLKCIAWNGYIIPVGFASGEIPQIPANILLVKNCSAVGLYWGAHSKHDPQLLRESVDKTLEYFKNGKLKGPYISASFGLDKVNEAFQMILQRKSTGKVVINTKQ.

This sequence belongs to the zinc-containing alcohol dehydrogenase family. Quinone oxidoreductase subfamily.

The polypeptide is Quinone oxidoreductase-like protein 2 homolog (Nematostella vectensis (Starlet sea anemone)).